The chain runs to 284 residues: Small ribosomal subunit protein uS5z (284 aa).

The segment covering 1–19 has biased composition (basic and acidic residues); sequence MAERGGEGGAERGGDRGDF. The disordered stretch occupies residues 1–51; that stretch reads MAERGGEGGAERGGDRGDFGRGFGGGRGGGRGRDRGPRGRGRRGGRASEET. A compositionally biased stretch (gly residues) spans 20–29; it reads GRGFGGGRGG. One can recognise an S5 DRBM domain in the interval 95–158; sequence LKDEVMKIMP…ILAKLSVVPV (64 aa).

The protein belongs to the universal ribosomal protein uS5 family.

The protein is Small ribosomal subunit protein uS5z (RPS2A) of Arabidopsis thaliana (Mouse-ear cress).